Reading from the N-terminus, the 341-residue chain is tRNA N6-adenosine threonylcarbamoyltransferase (341 aa).

2 residues coordinate Fe cation: His-111 and His-115. Substrate is bound by residues Leu-134–Gly-138, Asp-167, Gly-180, and Asn-276. Asp-304 is a binding site for Fe cation.

The protein belongs to the KAE1 / TsaD family. Fe(2+) is required as a cofactor.

The protein resides in the cytoplasm. The enzyme catalyses L-threonylcarbamoyladenylate + adenosine(37) in tRNA = N(6)-L-threonylcarbamoyladenosine(37) in tRNA + AMP + H(+). Required for the formation of a threonylcarbamoyl group on adenosine at position 37 (t(6)A37) in tRNAs that read codons beginning with adenine. Is involved in the transfer of the threonylcarbamoyl moiety of threonylcarbamoyl-AMP (TC-AMP) to the N6 group of A37, together with TsaE and TsaB. TsaD likely plays a direct catalytic role in this reaction. The sequence is that of tRNA N6-adenosine threonylcarbamoyltransferase from Pseudomonas aeruginosa (strain LESB58).